The following is a 1342-amino-acid chain: DNA-directed RNA polymerase subunit beta (1342 aa).

Belongs to the RNA polymerase beta chain family. The RNAP catalytic core consists of 2 alpha, 1 beta, 1 beta' and 1 omega subunit. When a sigma factor is associated with the core the holoenzyme is formed, which can initiate transcription.

The enzyme catalyses RNA(n) + a ribonucleoside 5'-triphosphate = RNA(n+1) + diphosphate. DNA-dependent RNA polymerase catalyzes the transcription of DNA into RNA using the four ribonucleoside triphosphates as substrates. The sequence is that of DNA-directed RNA polymerase subunit beta from Vibrio campbellii (strain ATCC BAA-1116).